The sequence spans 376 residues: Methionine import ATP-binding protein MetN 2 (376 aa).

The ABC transporter domain occupies 34-273 (VRFINLGKTY…PQHDVSKTLL (240 aa)). An ATP-binding site is contributed by 70–77 (GRSGAGKS).

Belongs to the ABC transporter superfamily. Methionine importer (TC 3.A.1.24) family. In terms of assembly, the complex is composed of two ATP-binding proteins (MetN), two transmembrane proteins (MetI) and a solute-binding protein (MetQ).

It localises to the cell inner membrane. It catalyses the reaction L-methionine(out) + ATP + H2O = L-methionine(in) + ADP + phosphate + H(+). It carries out the reaction D-methionine(out) + ATP + H2O = D-methionine(in) + ADP + phosphate + H(+). Functionally, part of the ABC transporter complex MetNIQ involved in methionine import. Responsible for energy coupling to the transport system. The protein is Methionine import ATP-binding protein MetN 2 of Pseudomonas savastanoi pv. phaseolicola (strain 1448A / Race 6) (Pseudomonas syringae pv. phaseolicola (strain 1448A / Race 6)).